A 129-amino-acid polypeptide reads, in one-letter code: uncharacterized protein (129 aa).

A disordered region spans residues 23–101 (KASTSSESCQ…TAATRTTSKK (79 aa)). Basic and acidic residues-rich tracts occupy residues 31–40 (CQRRGVRDDT) and 67–80 (EGDR…EKEP).

This is an uncharacterized protein from Ictaluridae (bullhead catfishes).